Consider the following 401-residue polypeptide: Zinc finger CCHC domain-containing protein 12 (401 aa).

Disordered stretches follow at residues 1 to 20 (MASI…PLPP) and 270 to 292 (DSDE…SAGP). Residues 270–282 (DSDEDVILVEPDD) show a composition bias toward acidic residues. The CCHC-type zinc finger occupies 345-362 (VHCSHCGEEGHSKETCDN).

It belongs to the ZCCHC12 family. As to quaternary structure, interacts with SMAD1 and CREB-binding protein (CBP). Forms a protein-DNA complex through its association with SMAD1.

In terms of biological role, transcriptional coactivator in the bone morphogenetic protein (BMP)-signaling pathway. It positively modulates BMP signaling by interacting with SMAD1 and associating with CBP in the transcription complex. It contributes to the BMP-induced enhancement of cholinergic-neuron-specific gene expression. The sequence is that of Zinc finger CCHC domain-containing protein 12 (Zcchc12) from Rattus norvegicus (Rat).